The chain runs to 300 residues: Lysenin-related protein 1 (300 aa).

The segment at 12 to 35 (EEIEVDVVSVWKEGYAYENRGNSS) is N-terminal cap domain. The tract at residues 36-109 (VQQKITMTKG…SQVIEHTVTI (74 aa)) is beta-hairpin domain. The N-terminal cap domain stretch occupies residues 110 to 158 (PPNKKFTRWKLNADVGGTGIEYMYLIDEVTAIGADLTIPEVNKSRAKIL). The tract at residues 159–299 (VGRQIHLGET…EDKWILEVVN (141 aa)) is C-terminal receptor-binding domain. Residues Lys187, Ser229, Tyr235, and Tyr284 each contribute to the an N-(acyl)-sphingosylphosphocholine site. Cys274 and Cys285 are disulfide-bonded.

Belongs to the lysenin family. Binds to sphingomyelin as a monomer by using its C-terminal domain. Forms a nonamer when sphingomyelin/LRP-1 ratio is lower than ca 500. Oligomerization, but not binding, is influenced by the fluidity of sphingomyelin. In terms of tissue distribution, expressed by coelomocytes.

It localises to the secreted. It is found in the target cell membrane. Functionally, pore-forming toxin that specifically binds sphingomyelin in the plasma membrane of various cells. Has hemolytic activity. Binding and hemolytic activities of this toxin are 10 times less than those of lysenin and lysenin-related protein 2. This is Lysenin-related protein 1 from Eisenia fetida (Red wiggler worm).